A 1726-amino-acid polypeptide reads, in one-letter code: Transcription elongation factor SPT6 (1726 aa).

3 stretches are compositionally biased toward acidic residues: residues 1 to 14 (MSDF…ESEE), 32 to 49 (EEED…DDQD), and 59 to 80 (NDDD…DSED). The disordered stretch occupies residues 1-197 (MSDFVESEAE…DDGQPLKKPK (197 aa)). Serine 2 bears the N-acetylserine mark. The segment at 2–485 (SDFVESEAEE…PKMQNAAKAS (484 aa)) is interaction with IWS1. Residues 2-916 (SDFVESEAEE…PPVLRQAVSL (915 aa)) are interaction with PAAF1. Residues 3–51 (DFVESEAEESEEEYNHEGEVVPRVTKKFVEEEDDDEEEEEENLDDQDER) adopt a coiled-coil conformation. Phosphoserine occurs at positions 7 and 12. Serine 73, serine 78, and serine 91 each carry phosphoserine. Over residues 95–105 (RLEDDDFDLIE) the composition is skewed to acidic residues. A compositionally biased stretch (basic residues) spans 111 to 122 (KVKRGQKYRRVK). At serine 125 the chain carries Phosphoserine. Acidic residues-rich tracts occupy residues 126-136 (DDDEDDEEEYG), 150-160 (FQDEEGEEGQE), and 169-190 (PDEE…DDDG). The residue at position 267 (serine 267) is a Phosphoserine. Residues 317–1300 (ADWIYRNAFA…NEWKLPKDTY (984 aa)) form an interaction with KDM6A region. Residues 489–520 (LKRIKEDGDEEGEGEEAEDEEQRGPELKQASR) are disordered. Positions 495 to 509 (DGDEEGEGEEAEDEE) are enriched in acidic residues. Residues 510-520 (QRGPELKQASR) show a composition bias toward basic and acidic residues. Residue lysine 743 is modified to N6-acetyllysine. Residues 1213-1282 (WNHFDSGSCP…EKFSADLTCR (70 aa)) form the S1 motif domain. The SH2 domain occupies 1325–1431 (YIKRVIAHPS…FARDLLNHKY (107 aa)). Residue tyrosine 1515 is modified to Phosphotyrosine. At threonine 1523 the chain carries Phosphothreonine. Position 1526 is a phosphoserine (serine 1526). Phosphothreonine occurs at positions 1530 and 1532. Serine 1535 is subject to Phosphoserine. Threonine 1539 carries the post-translational modification Phosphothreonine. The segment at 1633-1726 (PQYHQLQAST…ATPLLDEMDR (94 aa)) is interaction with histone H2B and H3. The disordered stretch occupies residues 1636–1726 (HQLQASTTPQ…ATPLLDEMDR (91 aa)). A compositionally biased stretch (low complexity) spans 1639–1664 (QASTTPQSTQAQPQPSSSSRQRQQQP). N6-acetyllysine is present on lysine 1676. Threonine 1697 bears the Phosphothreonine mark. Residues serine 1701 and serine 1703 each carry the phosphoserine modification. Threonine 1709 and threonine 1718 each carry phosphothreonine.

Belongs to the SPT6 family. Interacts with RNA polymerase II and the DRB sensitivity-inducing factor complex (DSIF complex), which is composed of SUPT5H and SUPT4H1 or SUPT4H2. Interacts with PAAF1. Interacts with histone H2B and H3. Interacts (via SH2 domain) with POLR2A phosphorylated at 'Ser-2'. Interacts (via SH2 domain) with SETD1A. Interacts with IWS1, KDM6A and AICDA. Interacts with WDR43. Dephosphorylated at Ser-1530 by the PNUTS-PP1 complex during RNA polymerase II transcription pause-release. In terms of tissue distribution, ubiquitously expressed.

The protein resides in the nucleus. Functionally, histone H3-H4 chaperone that plays a key role in the regulation of transcription elongation and mRNA processing. Enhances the transcription elongation by RNA polymerase II (RNAPII) and is also required for the efficient activation of transcriptional elongation by the HIV-1 nuclear transcriptional activator, Tat. Besides chaperoning histones in transcription, acts to transport and splice mRNA by forming a complex with IWS1 and the C-terminal domain (CTD) of the RNAPII subunit RPB1 (POLR2A). The SUPT6H:IWS1:CTD complex recruits mRNA export factors (ALYREF/THOC4, EXOSC10) as well as histone modifying enzymes (such as SETD2), to ensure proper mRNA splicing, efficient mRNA export and elongation-coupled H3K36 methylation, a signature chromatin mark of active transcription. SUPT6H via its association with SETD1A, regulates both class-switch recombination and somatic hypermutation through formation of H3K4me3 epigenetic marks on activation-induced cytidine deaminase (AICDA) target loci. Promotes the activation of the myogenic gene program by entailing erasure of the repressive H3K27me3 epigenetic mark through stabilization of the chromatin interaction of the H3K27 demethylase KDM6A. The polypeptide is Transcription elongation factor SPT6 (Supt6h) (Mus musculus (Mouse)).